We begin with the raw amino-acid sequence, 619 residues long: Phosphomethylpyrimidine synthase (619 aa).

Residues 93–104 (IKPEDNGLKGPD) are compositionally biased toward basic and acidic residues. The disordered stretch occupies residues 93 to 114 (IKPEDNGLKGPDRSGGVTPFPN). Substrate is bound by residues N217, M246, Y275, H311, 331–333 (SRG), 372–375 (DGLR), and E411. Residue H415 coordinates Zn(2+). Residue Y438 coordinates substrate. H479 lines the Zn(2+) pocket. Residues C559, C562, and C567 each coordinate [4Fe-4S] cluster.

This sequence belongs to the ThiC family. As to quaternary structure, homodimer. Requires [4Fe-4S] cluster as cofactor.

The enzyme catalyses 5-amino-1-(5-phospho-beta-D-ribosyl)imidazole + S-adenosyl-L-methionine = 4-amino-2-methyl-5-(phosphooxymethyl)pyrimidine + CO + 5'-deoxyadenosine + formate + L-methionine + 3 H(+). It participates in cofactor biosynthesis; thiamine diphosphate biosynthesis. In terms of biological role, catalyzes the synthesis of the hydroxymethylpyrimidine phosphate (HMP-P) moiety of thiamine from aminoimidazole ribotide (AIR) in a radical S-adenosyl-L-methionine (SAM)-dependent reaction. The protein is Phosphomethylpyrimidine synthase of Rhizorhabdus wittichii (strain DSM 6014 / CCUG 31198 / JCM 15750 / NBRC 105917 / EY 4224 / RW1) (Sphingomonas wittichii).